The primary structure comprises 1241 residues: RNA polymerase II C-terminal domain phosphatase-like 3 (1241 aa).

Disordered regions lie at residues 361-402, 428-470, 505-525, 578-598, 677-702, 720-800, and 852-885; these read DHDA…TTEG, VFKT…HLIY, ISAPTASDQTVKPSAKSRDPR, KRQKSDTDAPKAAGTGGWLED, AIQKPMDPRRAAQLPGSSVQPGVSTP, VLQD…QNGT, and TERDVKHNPSNPNAQDEDVSVSAASVTAAAGPTR. Residues 368–378 are compositionally biased toward polar residues; it reads PSPTRETTPSL. Residues 441–466 are compositionally biased toward low complexity; the sequence is GEPNDGNGDVGGEVSSSVVKSSNPGS. A compositionally biased stretch (basic and acidic residues) spans 677-686; that stretch reads AIQKPMDPRR. 2 stretches are compositionally biased toward polar residues: residues 691–702 and 791–800; these read PGSSVQPGVSTP and PRQNISQNGT. Residues 871 to 881 show a composition bias toward low complexity; sequence SVSAASVTAAA. One can recognise an FCP1 homology domain in the interval 923–1103; that stretch reads FASQKLSLVL…GLLGPSLLEL (181 aa). One can recognise a BRCT domain in the interval 1146–1239; sequence EQRKILAGCR…QRANENLYAI (94 aa).

In terms of assembly, interacts with RAP74. Mg(2+) is required as a cofactor. Co(2+) serves as cofactor. Requires Mn(2+) as cofactor.

The protein resides in the nucleus. The enzyme catalyses O-phospho-L-seryl-[protein] + H2O = L-seryl-[protein] + phosphate. The catalysed reaction is O-phospho-L-threonyl-[protein] + H2O = L-threonyl-[protein] + phosphate. Completely dephosphorylates 'Ser-2', and partially 'Ser-5' and 'Ser-7' of the heptad repeats YSPTSPS in the C-terminal domain (CTD) of the largest RNA polymerase II subunit (RPB1). Involved in defense response. Acts as a negative regulator of immune gene expression and immunity to pathogen infections. Preferentially dephosphorylates 'Ser-2' of RNA polymerase II CTD. This counterregulates the MAP kinase (MAPK) or cyclin-dependent kinase C (CDKC)-mediated phosphorylation of CTD in response to pathogens and upon perception of microbe-associated molecular patterns (MAMPs). MAPKs phosphorylate and activate CDKCs, which are CTD kinases that positively regulate plant innate immunity. Acts as a negative regulator of stress gene transcription involved in abscisic acid (ABA) mediated signaling pathway and cold resistance. Acts as a post-transcriptional gene silencing (PTGS) suppressor. The chain is RNA polymerase II C-terminal domain phosphatase-like 3 from Arabidopsis thaliana (Mouse-ear cress).